The chain runs to 204 residues: Photosystem I reaction center subunit II-2, chloroplastic (204 aa).

Residues 1 to 44 constitute a chloroplast transit peptide; sequence MATQAAGIFSPAITTTTSAVKKLHLFSSSHRPKSLSFTKTAIRA. At threonine 47 the chain carries Phosphothreonine. A disordered region spans residues 47–71; it reads TESSSAAPAVKEAPVGFTPPQLDPN. Residues 137-145 form a ferredoxin and ferredoxin-oxidoreductase binding region; it reads RLRSKYKIT.

Belongs to the PsaD family. In terms of assembly, interacts with CURT1C.

It localises to the plastid. It is found in the chloroplast thylakoid membrane. PSAD can form complexes with ferredoxin and ferredoxin-oxidoreductase in photosystem I (PS I) reaction center. PSAD may encode the ferredoxin-docking protein. The polypeptide is Photosystem I reaction center subunit II-2, chloroplastic (PSAD2) (Arabidopsis thaliana (Mouse-ear cress)).